We begin with the raw amino-acid sequence, 96 residues long: UPF0235 protein VP2619 (96 aa).

The protein belongs to the UPF0235 family.

The protein is UPF0235 protein VP2619 of Vibrio parahaemolyticus serotype O3:K6 (strain RIMD 2210633).